Here is a 336-residue protein sequence, read N- to C-terminus: UbiA prenyltransferase domain-containing protein 1 (336 aa).

Positions 1-22 (MQEMKPAALSGSNGLNGASGSS) are disordered. Residues 7-22 (AALSGSNGLNGASGSS) show a composition bias toward low complexity. A run of 7 helical transmembrane segments spans residues 79–99 (LLLLLVCAVAVLLVHGAGNLV), 129–149 (VVMFGAVLYSAGCLCATLLYF), 158–178 (LALIYFGGLSSSFLYTGGIGL), 180–200 (YVALGDVVILITFGPLAVMFA), 201–221 (HAVQVGYLSVLPLVYAVPLAL), 254–274 (LSYVIYNLLLFVPYLLFCILA), and 315–335 (LLMGLFYVFGIILAPQGSLPL).

It belongs to the UbiA prenyltransferase family.

The protein localises to the endoplasmic reticulum membrane. It localises to the golgi apparatus membrane. Its subcellular location is the mitochondrion membrane. It carries out the reaction menadiol + (2E,6E,10E)-geranylgeranyl diphosphate = menaquinol-4 + diphosphate. It catalyses the reaction all-trans-decaprenyl diphosphate + 4-hydroxybenzoate = 4-hydroxy-3-(all-trans-decaprenyl)benzoate + diphosphate. It participates in quinol/quinone metabolism; menaquinone biosynthesis. The protein operates within cofactor biosynthesis; ubiquinone biosynthesis. In terms of biological role, prenyltransferase that mediates the formation of menaquinone-4 (MK-4) and coenzyme Q10. MK-4 is a vitamin K2 isoform required for endothelial cell development. Mediates the conversion of phylloquinone (PK) into MK-4, probably by cleaving the side chain of phylloquinone (PK) to release 2-methyl-1,4-naphthoquinone (menadione; K3) and then prenylating it with geranylgeranyl pyrophosphate (GGPP) to form MK-4. Also plays a role in cardiovascular development independently of MK-4 biosynthesis, by acting as a coenzyme Q10 biosynthetic enzyme: coenzyme Q10, also named ubiquinone, plays an important antioxidant role in the cardiovascular system. Mediates biosynthesis of coenzyme Q10 in the Golgi membrane, leading to protect cardiovascular tissues from nos3/eNOS-dependent oxidative stress. The chain is UbiA prenyltransferase domain-containing protein 1 (ubiad1) from Danio rerio (Zebrafish).